A 335-amino-acid chain; its full sequence is Large ribosomal subunit protein uL3 (335 aa).

3 disordered regions span residues 1–35, 234–256, and 312–335; these read MPQPNRPRKGSMGFSPRKRAESEVPRFNSWPADDG, IGNLGPWNPSRVRSTVPQQGQTG, and AVRPNESPRLDPEVRYVSTASNQG. The span at 244-256 shows a compositional bias: polar residues; sequence RVRSTVPQQGQTG.

Belongs to the universal ribosomal protein uL3 family. Part of the 50S ribosomal subunit. Forms a cluster with proteins L14 and L24e.

Functionally, one of the primary rRNA binding proteins, it binds directly near the 3'-end of the 23S rRNA, where it nucleates assembly of the 50S subunit. The polypeptide is Large ribosomal subunit protein uL3 (Halobacterium salinarum (strain ATCC 29341 / DSM 671 / R1)).